Reading from the N-terminus, the 290-residue chain is tRNA dimethylallyltransferase (290 aa).

9–16 (GPTASGKT) provides a ligand contact to ATP. A substrate-binding site is contributed by 11 to 16 (TASGKT). The interaction with substrate tRNA stretch occupies residues 34–37 (DSTQ).

The protein belongs to the IPP transferase family. In terms of assembly, monomer. The cofactor is Mg(2+).

It carries out the reaction adenosine(37) in tRNA + dimethylallyl diphosphate = N(6)-dimethylallyladenosine(37) in tRNA + diphosphate. Catalyzes the transfer of a dimethylallyl group onto the adenine at position 37 in tRNAs that read codons beginning with uridine, leading to the formation of N6-(dimethylallyl)adenosine (i(6)A). This chain is tRNA dimethylallyltransferase, found in Phytoplasma australiense.